A 182-amino-acid polypeptide reads, in one-letter code: ATP synthase subunit delta (182 aa).

This sequence belongs to the ATPase delta chain family. F-type ATPases have 2 components, F(1) - the catalytic core - and F(0) - the membrane proton channel. F(1) has five subunits: alpha(3), beta(3), gamma(1), delta(1), epsilon(1). CF(0) has four main subunits: a(1), b(1), b'(1) and c(10-14). The alpha and beta chains form an alternating ring which encloses part of the gamma chain. F(1) is attached to F(0) by a central stalk formed by the gamma and epsilon chains, while a peripheral stalk is formed by the delta, b and b' chains.

It localises to the cellular thylakoid membrane. F(1)F(0) ATP synthase produces ATP from ADP in the presence of a proton or sodium gradient. F-type ATPases consist of two structural domains, F(1) containing the extramembraneous catalytic core and F(0) containing the membrane proton channel, linked together by a central stalk and a peripheral stalk. During catalysis, ATP synthesis in the catalytic domain of F(1) is coupled via a rotary mechanism of the central stalk subunits to proton translocation. Its function is as follows. This protein is part of the stalk that links CF(0) to CF(1). It either transmits conformational changes from CF(0) to CF(1) or is implicated in proton conduction. The sequence is that of ATP synthase subunit delta from Synechococcus sp. (strain WH7803).